Consider the following 360-residue polypeptide: Protein phosphatase 1L (360 aa).

Over 1 to 25 the chain is Extracellular; the sequence is MIEDTMTLLSLLGRIMRYFLLRPET. The helical transmembrane segment at 26 to 42 threads the bilayer; sequence LFLLCISLALWSYFFHT. Over 43-360 the chain is Cytoplasmic; sequence DEVKTIVKSS…FRNSSKTEEQ (318 aa). A PPM-type phosphatase domain is found at 92-351; the sequence is NVAVYSIQGR…DNITVMVVKF (260 aa). Residues Asp128, Gly129, Asp302, and Asp342 each contribute to the Mn(2+) site.

Belongs to the PP2C family. Interacts with MAP3K7/TAK1 and MAP3K5. It depends on Mg(2+) as a cofactor. The cofactor is Mn(2+).

The protein localises to the membrane. It catalyses the reaction O-phospho-L-seryl-[protein] + H2O = L-seryl-[protein] + phosphate. It carries out the reaction O-phospho-L-threonyl-[protein] + H2O = L-threonyl-[protein] + phosphate. In terms of biological role, acts as a suppressor of the SAPK signaling pathways by associating with and dephosphorylating MAP3K7/TAK1 and MAP3K5, and by attenuating the association between MAP3K7/TAK1 and MAP2K4 or MAP2K6. This Bos taurus (Bovine) protein is Protein phosphatase 1L (PPM1L).